Consider the following 677-residue polypeptide: DNA-directed RNA polymerase subunit beta' (677 aa).

Zn(2+) contacts are provided by cysteine 69, cysteine 71, cysteine 87, and cysteine 90. Residues aspartate 489, aspartate 491, and aspartate 493 each contribute to the Mg(2+) site.

It belongs to the RNA polymerase beta' chain family. RpoC1 subfamily. As to quaternary structure, in plastids the minimal PEP RNA polymerase catalytic core is composed of four subunits: alpha, beta, beta', and beta''. When a (nuclear-encoded) sigma factor is associated with the core the holoenzyme is formed, which can initiate transcription. The cofactor is Mg(2+). Zn(2+) serves as cofactor.

The protein localises to the plastid. It localises to the chloroplast. The catalysed reaction is RNA(n) + a ribonucleoside 5'-triphosphate = RNA(n+1) + diphosphate. Its function is as follows. DNA-dependent RNA polymerase catalyzes the transcription of DNA into RNA using the four ribonucleoside triphosphates as substrates. The protein is DNA-directed RNA polymerase subunit beta' of Spinacia oleracea (Spinach).